A 179-amino-acid polypeptide reads, in one-letter code: Large ribosomal subunit protein uL5 (179 aa).

This sequence belongs to the universal ribosomal protein uL5 family. As to quaternary structure, part of the 50S ribosomal subunit; part of the 5S rRNA/L5/L18/L25 subcomplex. Contacts the 5S rRNA and the P site tRNA. Forms a bridge to the 30S subunit in the 70S ribosome.

Its function is as follows. This is one of the proteins that bind and probably mediate the attachment of the 5S RNA into the large ribosomal subunit, where it forms part of the central protuberance. In the 70S ribosome it contacts protein S13 of the 30S subunit (bridge B1b), connecting the 2 subunits; this bridge is implicated in subunit movement. Contacts the P site tRNA; the 5S rRNA and some of its associated proteins might help stabilize positioning of ribosome-bound tRNAs. This Histophilus somni (strain 129Pt) (Haemophilus somnus) protein is Large ribosomal subunit protein uL5.